The following is a 186-amino-acid chain: Elongation factor P (186 aa).

This sequence belongs to the elongation factor P family.

It is found in the cytoplasm. The protein operates within protein biosynthesis; polypeptide chain elongation. Involved in peptide bond synthesis. Stimulates efficient translation and peptide-bond synthesis on native or reconstituted 70S ribosomes in vitro. Probably functions indirectly by altering the affinity of the ribosome for aminoacyl-tRNA, thus increasing their reactivity as acceptors for peptidyl transferase. This Prochlorococcus marinus (strain MIT 9312) protein is Elongation factor P.